A 172-amino-acid polypeptide reads, in one-letter code: VLLDGNGEVVQNGGTYYLLPQVWAQGGGVQLAKTGEETCPLTVVQSPNELSDGKPIRIESRLRSTFIPDDDEVRIGFAYAPKCAPSPWWTVVEDEQEGLSVKLSEDESTQFDYPFKFEQVSDKLHSYKLLYCEGKHEKCASIGINRDQKGYRRLVVTEDNPLTVVLKKDESS.

Cystine bridges form between C39-C83 and C132-C139.

Belongs to the protease inhibitor I3 (leguminous Kunitz-type inhibitor) family.

Functionally, inhibition of trypsin. In Erythrina latissima (Broad-leaved coral tree), this protein is Trypsin inhibitor DE-3.